Consider the following 557-residue polypeptide: TGF-beta receptor type-2 (557 aa).

Positions 1-23 (MPPRLRPLLLRVSLWVLVGSSSP) are cleaved as a signal peptide. Residues 24 to 155 (ALLHDRSKEN…KPEEKDEISK (132 aa)) are Extracellular-facing. 6 disulfide bridges follow: Cys41–Cys74, Cys44–Cys61, Cys51–Cys57, Cys67–Cys91, Cys111–Cys126, and Cys128–Cys133. N-linked (GlcNAc...) asparagine glycosylation is found at Asn62 and Asn84. A helical transmembrane segment spans residues 156-176 (VTIISLVPLLVISVAVIVIFY). Residues 177–557 (AYRTHKKRKL…PEDGSVTTAK (381 aa)) are Cytoplasmic-facing. The 304-residue stretch at 234–537 (IELDIVVGKG…FSEFKHHDKL (304 aa)) folds into the Protein kinase domain. Residues 240-248 (VGKGRFAEV) and Lys267 contribute to the ATP site. The active-site Proton acceptor is the Asp369.

Belongs to the protein kinase superfamily. TKL Ser/Thr protein kinase family. TGFB receptor subfamily. Heterohexamer; TGFB1, TGFB2 and TGFB3 homodimeric ligands assemble a functional receptor composed of two TGFBR1 and TGFBR2 heterodimers to form a ligand-receptor heterohexamer. It depends on Mg(2+) as a cofactor. The cofactor is Mn(2+). Phosphorylated on a Ser/Thr residue in the cytoplasmic domain. Detected at low levels in embryonic heart, brain and lung. Detected at high levels in hatchling heart and lung.

The protein resides in the cell membrane. The protein localises to the membrane raft. The catalysed reaction is L-threonyl-[receptor-protein] + ATP = O-phospho-L-threonyl-[receptor-protein] + ADP + H(+). It carries out the reaction L-seryl-[receptor-protein] + ATP = O-phospho-L-seryl-[receptor-protein] + ADP + H(+). In terms of biological role, transmembrane serine/threonine kinase forming with the TGF-beta type I serine/threonine kinase receptor, TGFBR1, the non-promiscuous receptor for the TGF-beta cytokines TGFB1, TGFB2 and TGFB3. Transduces the TGFB1, TGFB2 and TGFB3 signal from the cell surface to the cytoplasm and is thus regulating a plethora of physiological and pathological processes including cell cycle arrest in epithelial and hematopoietic cells, control of mesenchymal cell proliferation and differentiation, wound healing, extracellular matrix production, immunosuppression and carcinogenesis. The formation of the receptor complex composed of 2 TGFBR1 and 2 TGFBR2 molecules symmetrically bound to the cytokine dimer results in the phosphorylation and the activation of TGFRB1 by the constitutively active TGFBR2. Activated TGFBR1 phosphorylates SMAD2 which dissociates from the receptor and interacts with SMAD4. The SMAD2-SMAD4 complex is subsequently translocated to the nucleus where it modulates the transcription of the TGF-beta-regulated genes. This constitutes the canonical SMAD-dependent TGF-beta signaling cascade. Also involved in non-canonical, SMAD-independent TGF-beta signaling pathways. This chain is TGF-beta receptor type-2 (TGFBR2), found in Gallus gallus (Chicken).